The primary structure comprises 445 residues: Phosphoglucosamine mutase (445 aa).

Ser101 (phosphoserine intermediate) is an active-site residue. Mg(2+) is bound by residues Ser101, Asp240, Asp242, and Asp244. Ser101 bears the Phosphoserine mark.

It belongs to the phosphohexose mutase family. Mg(2+) is required as a cofactor. In terms of processing, activated by phosphorylation.

The enzyme catalyses alpha-D-glucosamine 1-phosphate = D-glucosamine 6-phosphate. Catalyzes the conversion of glucosamine-6-phosphate to glucosamine-1-phosphate. In Pseudomonas aeruginosa (strain LESB58), this protein is Phosphoglucosamine mutase.